We begin with the raw amino-acid sequence, 344 residues long: S-adenosylmethionine:tRNA ribosyltransferase-isomerase (344 aa).

This sequence belongs to the QueA family. As to quaternary structure, monomer.

The protein localises to the cytoplasm. It carries out the reaction 7-aminomethyl-7-carbaguanosine(34) in tRNA + S-adenosyl-L-methionine = epoxyqueuosine(34) in tRNA + adenine + L-methionine + 2 H(+). Its pathway is tRNA modification; tRNA-queuosine biosynthesis. In terms of biological role, transfers and isomerizes the ribose moiety from AdoMet to the 7-aminomethyl group of 7-deazaguanine (preQ1-tRNA) to give epoxyqueuosine (oQ-tRNA). This chain is S-adenosylmethionine:tRNA ribosyltransferase-isomerase, found in Heliobacterium modesticaldum (strain ATCC 51547 / Ice1).